Here is a 253-residue protein sequence, read N- to C-terminus: Imidazole glycerol phosphate synthase subunit HisF (253 aa).

Catalysis depends on residues Asp11 and Asp130.

This sequence belongs to the HisA/HisF family. As to quaternary structure, heterodimer of HisH and HisF.

The protein localises to the cytoplasm. The catalysed reaction is 5-[(5-phospho-1-deoxy-D-ribulos-1-ylimino)methylamino]-1-(5-phospho-beta-D-ribosyl)imidazole-4-carboxamide + L-glutamine = D-erythro-1-(imidazol-4-yl)glycerol 3-phosphate + 5-amino-1-(5-phospho-beta-D-ribosyl)imidazole-4-carboxamide + L-glutamate + H(+). The protein operates within amino-acid biosynthesis; L-histidine biosynthesis; L-histidine from 5-phospho-alpha-D-ribose 1-diphosphate: step 5/9. Functionally, IGPS catalyzes the conversion of PRFAR and glutamine to IGP, AICAR and glutamate. The HisF subunit catalyzes the cyclization activity that produces IGP and AICAR from PRFAR using the ammonia provided by the HisH subunit. In Dinoroseobacter shibae (strain DSM 16493 / NCIMB 14021 / DFL 12), this protein is Imidazole glycerol phosphate synthase subunit HisF.